Consider the following 874-residue polypeptide: Ribosome biogenesis protein ERB1 (874 aa).

The segment at 1-148 (MAKKEVSASK…DAFAAADAAT (148 aa)) is disordered. Positions 27-41 (QAVEKEEAEKEKEEG) are enriched in basic and acidic residues. Residues 55-77 (PESDSDDEGAAAAEEEEEEEEQQ) show a composition bias toward acidic residues. Residues 78–89 (QDVKELDLDKGE) are compositionally biased toward basic and acidic residues. 2 stretches are compositionally biased toward acidic residues: residues 95–104 (SDAEDFDSEE) and 128–139 (PKEDGDEQDEQD). The interval 312–429 (RFVPSKHEAK…LRLVPGYQDS (118 aa)) is required for interaction with NOP7. Residues 429-465 (SVRERFERSLDLYLAPRLRKNKLNIDPESLIPELPSP) form a required for interaction with YTM1 region. WD repeat units lie at residues 481–520 (GHTG…QVFK) and 529–569 (NGED…FEIE). Over residues 593-602 (KVKGEDTKGD) the composition is skewed to basic and acidic residues. The segment at 593–640 (KVKGEDTKGDLDDDEEEEEEEEDDDDDEGQGKVKAHNSTAPAKKDVAK) is disordered. Residues 603–620 (LDDDEEEEEEEEDDDDDE) are compositionally biased toward acidic residues. 5 WD repeats span residues 658 to 700 (QCRR…SQSP), 703 to 741 (KSKG…LLKK), 744 to 783 (PGVR…TPYK), 787 to 827 (YHEK…DLMT), and 843 to 874 (INQI…LWTT).

The protein belongs to the WD repeat BOP1/ERB1 family. Component of the NOP7 complex, composed of ERB1, NOP7 and YTM1. The complex is held together by ERB1, which interacts with NOP7 via its N-terminal domain and with YTM1 via a high-affinity interaction between the seven-bladed beta-propeller domains of the 2 proteins. The NOP7 complex associates with the 66S pre-ribosome.

It is found in the nucleus. The protein resides in the nucleolus. It localises to the nucleoplasm. Functionally, component of the NOP7 complex, which is required for maturation of the 25S and 5.8S ribosomal RNAs and formation of the 60S ribosome. This is Ribosome biogenesis protein ERB1 from Lodderomyces elongisporus (strain ATCC 11503 / CBS 2605 / JCM 1781 / NBRC 1676 / NRRL YB-4239) (Yeast).